The chain runs to 344 residues: Glyceraldehyde-3-phosphate dehydrogenase (344 aa).

NAD(+) contacts are provided by residues 11-12 (TI) and Gly110. 139-141 (SCN) contacts D-glyceraldehyde 3-phosphate. Catalysis depends on Cys140, which acts as the Nucleophile. Arg169 provides a ligand contact to NAD(+). 195-196 (HG) is a D-glyceraldehyde 3-phosphate binding site. Gln302 serves as a coordination point for NAD(+).

This sequence belongs to the glyceraldehyde-3-phosphate dehydrogenase family. Homotetramer.

It is found in the cytoplasm. It carries out the reaction D-glyceraldehyde 3-phosphate + phosphate + NADP(+) = (2R)-3-phospho-glyceroyl phosphate + NADPH + H(+). It catalyses the reaction D-glyceraldehyde 3-phosphate + phosphate + NAD(+) = (2R)-3-phospho-glyceroyl phosphate + NADH + H(+). Its pathway is carbohydrate degradation; glycolysis; pyruvate from D-glyceraldehyde 3-phosphate: step 1/5. The protein is Glyceraldehyde-3-phosphate dehydrogenase of Pyrobaculum neutrophilum (strain DSM 2338 / JCM 9278 / NBRC 100436 / V24Sta) (Thermoproteus neutrophilus).